A 612-amino-acid chain; its full sequence is MKHFRTERVRATPKLFTYVLVGFIALLGLTCLYYGSSFAPGSRKSDEFDGSNNRVRTGIGSLRNRDIVLAVSRFEVPKSVPICDSRHSELIPCLDRNLHYQLKLKLNLSLMEHYEHHCPPSERRFNCLVPPPVGYKIPLRWPVSRDEVWKANIPHTHLAQEKSDQNWMVVNGDKINFPGGGTHFHNGADKYIVSLAQMLKFPGDKLNNGGSIRNVLDVGCGVASFGAYLLSHDIIAMSLAPNDVHQNQIQFALERGIPSTLGVLGTKRLPYPSRSFELAHCSRCRIDWLQRDGILLLELDRLLRPGGYFVYSSPEAYAHDPENRKIGNAMHDLFKRMCWKVVAKRDQSVIWGKPISNSCYLKRDPGVLPPLCPSGDDPDATWNVSMKACISPYSVRMHKERWSGLVPWPRRLTAPPPRLEEIGVTPEQFREDTETWRLRVIEYWKLLKPMVQKNSIRNVMDMSSNLGGFAAALNDKDVWVMNVMPVQSSPRMKIIYDRGLIGATHDWCEAFDTYPRTFDLIHAWNTFTETQARGCSFEDLLIEMDRILRPEGFVIIRDTTDNISYIKKYLTLLKWDKWSTETTPKGDPLSTKDEIVLIARKKLWSLPAISVS.

Residues 1-14 lie on the Cytoplasmic side of the membrane; sequence MKHFRTERVRATPK. Residues 15 to 35 traverse the membrane as a helical; Signal-anchor for type II membrane protein segment; the sequence is LFTYVLVGFIALLGLTCLYYG. Residues 36-612 are Lumenal-facing; it reads SSFAPGSRKS…LWSLPAISVS (577 aa). N-linked (GlcNAc...) asparagine glycans are attached at residues asparagine 107, asparagine 383, and asparagine 562.

The protein belongs to the methyltransferase superfamily.

The protein localises to the golgi apparatus membrane. This chain is Probable methyltransferase PMT9, found in Arabidopsis thaliana (Mouse-ear cress).